A 160-amino-acid polypeptide reads, in one-letter code: Cytochrome b6-f complex subunit 4 (160 aa).

Transmembrane regions (helical) follow at residues 36-56, 95-115, and 131-151; these read LLYM…GLAV, LLGV…PFIE, and TVFL…TLPI.

It belongs to the cytochrome b family. PetD subfamily. The 4 large subunits of the cytochrome b6-f complex are cytochrome b6, subunit IV (17 kDa polypeptide, petD), cytochrome f and the Rieske protein, while the 4 small subunits are petG, petL, petM and petN. The complex functions as a dimer.

The protein localises to the plastid. It is found in the chloroplast thylakoid membrane. Its function is as follows. Component of the cytochrome b6-f complex, which mediates electron transfer between photosystem II (PSII) and photosystem I (PSI), cyclic electron flow around PSI, and state transitions. This Nephroselmis olivacea (Green alga) protein is Cytochrome b6-f complex subunit 4.